The following is a 734-amino-acid chain: Photosystem I P700 chlorophyll a apoprotein A2 (734 aa).

8 helical membrane-spanning segments follow: residues 46–69 (IFAS…FHVA), 135–158 (LYTG…LHLQ), 175–199 (LNHH…HVAI), 273–291 (IAHH…GHMY), 330–353 (LHFQ…QHMY), 369–395 (AALY…ILVI), 417–439 (AIIS…LYVH), and 517–535 (FLVH…LILV). The [4Fe-4S] cluster site is built by Cys-559 and Cys-568. A run of 2 helical transmembrane segments spans residues 575–596 (AFYL…YWHW) and 643–665 (LSVW…MFLI). The chlorophyll a site is built by His-654, Met-662, and Tyr-670. Residue Trp-671 participates in phylloquinone binding. The chain crosses the membrane as a helical span at residues 707-727 (LVGLAHFSVGYIFTYAAFLIA).

Belongs to the PsaA/PsaB family. In terms of assembly, the PsaA/B heterodimer binds the P700 chlorophyll special pair and subsequent electron acceptors. PSI consists of a core antenna complex that captures photons, and an electron transfer chain that converts photonic excitation into a charge separation. The eukaryotic PSI reaction center is composed of at least 11 subunits. P700 is a chlorophyll a/chlorophyll a' dimer, A0 is one or more chlorophyll a, A1 is one or both phylloquinones and FX is a shared 4Fe-4S iron-sulfur center. serves as cofactor.

It localises to the plastid. It is found in the chloroplast thylakoid membrane. The catalysed reaction is reduced [plastocyanin] + hnu + oxidized [2Fe-2S]-[ferredoxin] = oxidized [plastocyanin] + reduced [2Fe-2S]-[ferredoxin]. In terms of biological role, psaA and PsaB bind P700, the primary electron donor of photosystem I (PSI), as well as the electron acceptors A0, A1 and FX. PSI is a plastocyanin-ferredoxin oxidoreductase, converting photonic excitation into a charge separation, which transfers an electron from the donor P700 chlorophyll pair to the spectroscopically characterized acceptors A0, A1, FX, FA and FB in turn. Oxidized P700 is reduced on the lumenal side of the thylakoid membrane by plastocyanin. This chain is Photosystem I P700 chlorophyll a apoprotein A2, found in Atropa belladonna (Belladonna).